Here is a 520-residue protein sequence, read N- to C-terminus: L-tyrosine:2-oxoglutarate aminotransferase amt1 (520 aa).

This sequence belongs to the class-I pyridoxal-phosphate-dependent aminotransferase family. The cofactor is pyridoxal 5'-phosphate.

It catalyses the reaction L-tyrosine + 2-oxoglutarate = 3-(4-hydroxyphenyl)pyruvate + L-glutamate. Its pathway is secondary metabolite biosynthesis. In terms of biological role, an L-tyrosine:2-oxoglutarate aminotransferase (probably amt1) and atromentin synthetase nps3 catalyze consecutive steps to turn over L-tyrosine into atromentin, which represents the generic precursor molecule for the entire terphenylquinone and pulvinic acid family of pigments, which are widely distributed secondary metabolites in homobasidiomycetes. The first step catalyzed by amt1 converts L-tyrosine in to 4-hydroxyphenylpyruvate (4-HPP). Adenylation of two 4-HPP monomers by the nps3 adenylation (A) domain, covalent tethering of the monomers as a thioester and oxoester onto the nps3 thiolation (T) and thioesterase (TE) domains, respectively, and symmetric C-C-bond formation between two monomers catalyzed by the nps3 TE domain leads to atromentin. Follow-up products of atromentin in S.lacrymans include atromentic acid, xerocomic acid, isoxerocomic acid and variegatic acid. The polypeptide is L-tyrosine:2-oxoglutarate aminotransferase amt1 (amt1) (Serpula lacrymans var. lacrymans (strain S7.9) (Dry rot fungus)).